The chain runs to 488 residues: GTPase Der (488 aa).

2 EngA-type G domains span residues 3–166 (PVVA…AEAM) and 199–372 (IKLA…DSAT). Residues 9-16 (GRPNVGKS), 56-60 (DTGGI), 118-121 (NKID), 205-212 (GKPNVGKS), 252-256 (DTAGV), and 317-320 (NKWD) contribute to the GTP site. A KH-like domain is found at 373 to 457 (RRVSTSMLTR…PIQLRFQEGD (85 aa)).

The protein belongs to the TRAFAC class TrmE-Era-EngA-EngB-Septin-like GTPase superfamily. EngA (Der) GTPase family. As to quaternary structure, associates with the 50S ribosomal subunit.

Functionally, GTPase that plays an essential role in the late steps of ribosome biogenesis. This is GTPase Der from Shewanella sp. (strain ANA-3).